The sequence spans 384 residues: Probable UDP-galactopyranose mutase (384 aa).

An N-terminal signal peptide occupies residues 1-19 (MNNKNIMIVGAGFSGVVIA). FAD is bound by residues S14, 33 to 34 (DR), N41, and 60 to 61 (HI). 5 residues coordinate UDP-alpha-D-galactose: N84, F151, T156, W160, and Y185. F219 serves as a coordination point for FAD. UDP-alpha-D-galactose-binding residues include N270, R280, and Y314. An FAD-binding site is contributed by R343. UDP-alpha-D-galactose is bound at residue Y349. FAD is bound at residue 350-355 (LDMDVT).

The protein belongs to the UDP-galactopyranose/dTDP-fucopyranose mutase family. In terms of assembly, homodimer. Requires FAD as cofactor.

It carries out the reaction UDP-alpha-D-galactose = UDP-alpha-D-galactofuranose. It participates in bacterial outer membrane biogenesis; LPS O-antigen biosynthesis. In terms of biological role, catalyzes the interconversion through a 2-keto intermediate of uridine diphosphogalactopyranose (UDP-GalP) into uridine diphosphogalactofuranose (UDP-GalF). The protein is Probable UDP-galactopyranose mutase (rfbD) of Klebsiella pneumoniae.